Reading from the N-terminus, the 223-residue chain is Ubiquitin-conjugating enzyme E2 S (223 aa).

Met1 is modified (N-acetylmethionine). In terms of domain architecture, UBC core spans 11–157 (HIIRLVYKEV…ARLLTEIHGG (147 aa)). Residue Cys95 is the Glycyl thioester intermediate of the active site. A disordered region spans residues 155–223 (HGGAGGPSGG…TDKKRALRRL (69 aa)). Low complexity predominate over residues 169 to 195 (GRATASGAAASTADPTAPGGPAGAEGP). Ser174 bears the Phosphoserine mark. Residues 209 to 223 (AAKKKTDKKRALRRL) show a composition bias toward basic residues.

This sequence belongs to the ubiquitin-conjugating enzyme family. Component of the APC/C complex, composed of at least 14 distinct subunits that assemble into a complex of at least 19 chains with a combined molecular mass of around 1.2 MDa. Within this complex, directly interacts with ANAPC2 and ANAPC4. Interacts with CDC20, FZR1/CDH1 and VHL. In terms of processing, autoubiquitinated by the APC/C complex during G1, leading to its degradation by the proteasome.

The catalysed reaction is S-ubiquitinyl-[E1 ubiquitin-activating enzyme]-L-cysteine + [E2 ubiquitin-conjugating enzyme]-L-cysteine = [E1 ubiquitin-activating enzyme]-L-cysteine + S-ubiquitinyl-[E2 ubiquitin-conjugating enzyme]-L-cysteine.. It functions in the pathway protein modification; protein ubiquitination. Accepts ubiquitin from the E1 complex and catalyzes its covalent attachment to other proteins. Catalyzes 'Lys-11'-linked polyubiquitination. Acts as an essential factor of the anaphase promoting complex/cyclosome (APC/C), a cell cycle-regulated ubiquitin ligase that controls progression through mitosis. Acts by specifically elongating 'Lys-11'-linked polyubiquitin chains initiated by the E2 enzyme UBE2C/UBCH10 on APC/C substrates, enhancing the degradation of APC/C substrates by the proteasome and promoting mitotic exit. Also acts by elongating ubiquitin chains initiated by the E2 enzyme UBE2D1/UBCH5 in vitro; it is however unclear whether UBE2D1/UBCH5 acts as an E2 enzyme for the APC/C in vivo. Also involved in ubiquitination and subsequent degradation of VHL, resulting in an accumulation of HIF1A. In vitro able to promote polyubiquitination using all 7 ubiquitin Lys residues, except 'Lys-48'-linked polyubiquitination. The chain is Ubiquitin-conjugating enzyme E2 S (UBE2S) from Bos taurus (Bovine).